The following is an 810-amino-acid chain: Venom phosphodiesterase 2 (810 aa).

The N-terminal stretch at 1 to 23 (MIQQKVLFISLVAVTLGLGLGLG) is a signal peptide. The region spanning 33-77 (QSWSCSKLRCGEKRIANVLCSCSDDCLEKKDCCTDYKSICKGETS) is the SMB domain. Disulfide bonds link C37–C42, C37–C54, C42–C72, C52–C54, C52–C65, C58–C64, C65–C72, C83–C129, and C91–C303. Positions 106 and 144 each coordinate a divalent metal cation. The active-site AMP-threonine intermediate is the T144. N175, N218, and N229 each carry an N-linked (GlcNAc...) asparagine glycan. K230 is a binding site for AMP. Residues D264, H268, D311, and H312 each coordinate a divalent metal cation. H268 lines the AMP pocket. Intrachain disulfides connect C319–C416, C367–C752, C500–C558, C513–C613, C515–C598, and C721–C731. A glycan (N-linked (GlcNAc...) asparagine) is linked at N364. A divalent metal cation is bound at residue H421. Residues N471, N553, N633, and N704 are each glycosylated (N-linked (GlcNAc...) asparagine).

Belongs to the nucleotide pyrophosphatase/phosphodiesterase family. In terms of assembly, monomer cleaved in two subunits; disulfide-linked. Is synthesized as a single-chain protein and is subsequently cleaved to form a two-subunit protein held together with disulfide bonds. Requires a divalent metal cation as cofactor. In terms of tissue distribution, expressed by venom gland.

The protein localises to the secreted. The catalysed reaction is ADP + H2O = AMP + phosphate + H(+). In terms of biological role, hydrolyzes ADP with high activity. Shows weak or no activity on 5'-AMP, 5'-GMP, 3'-AMP, ATP, cAMP, and cGMP. Is devoid of monophosphatase and proteinase activities. Dose-dependently inhibits platelet aggregation induced by ADP (IC(50)=0.99 uM) and collagen (IC(50)=1.4 uM). The chain is Venom phosphodiesterase 2 from Crotalus adamanteus (Eastern diamondback rattlesnake).